The chain runs to 708 residues: Large T antigen (708 aa).

M1 carries the post-translational modification N-acetylmethionine; by host. A J domain is found at Q12–G75. Residues E63 to D89 form a binding of LT to the CUL7 complex region. The LXCXE motif motif lies at L103–E107. Phosphoserine; by host occurs at positions 106, 112, 120, and 123. The tract at residues M109–D134 is disordered. Residue T124 is modified to Phosphothreonine; by host. The Nuclear localization signal motif lies at P125–V132. Residues P139–E254 constitute a DNA-binding region (T-ag OBD). The T-ag D1-type zinc-finger motif lies at T265–R357. Residues C302, C305, H313, and H317 each coordinate Zn(2+). The binding to host TP53 protein stretch occupies residues C337–Q672. In terms of domain architecture, SF3 helicase spans K400–S560. The segment at K418–K616 is ATPase activity. Residue G426–T433 participates in ATP binding. Residues D627–T708 form a C-terminal region region. Residues R630–Q685 form a disordered region. Position 639 is a phosphoserine; by host (S639). Residues N642–G662 show a composition bias toward basic and acidic residues. Positions I663–S679 are enriched in polar residues. Phosphoserine; by host occurs at positions 676, 677, and 679. K697 carries the post-translational modification N6-acetyllysine; by host. The CPD stretch occupies residues P699 to T708. T701 carries the post-translational modification Phosphothreonine; by host.

In terms of assembly, isoform large T antigen forms homohexamers in the presence of ATP. Interacts with host HDAC1. Interacts (via LXCXE domain) with host RB1; the interaction induces the aberrant dissociation of RB1-E2F1 complex thereby disrupting RB1's activity. Interacts (via LXCXE domain) with host pRB-related proteins RBL1 and RBL2. Interacts (via C-terminus) with host TOP1 and POLA1 allowing DNA replication. Interacts with host TP53, inhibiting TP53 binding to DNA. Interacts with host preinitiation complex components TBP, TFIIA and TFIID to regulate transcription initiation. LT interacts (via CPD region) with host FBW7gamma isoform (via WD repeats); seems to function as a competitive inhibitor of FBW7gamma function for physiologic substrates. LT interacts with host E3 ubiquitin ligase CUL7; this interaction seems to inhibit CUL7. Component of a SCF(CUL7)-like complex composed of SV40 Lt and host proteins CUL7, SKP1, RBX1, and FBXW8. LT interacts with host BUB1; this interaction induces activation of a DNA damage response and promotes p53 stabilization and phosphorylation. Interacts with host FAM111A and this interaction is required for efficient viral replication and sustained viral gene expression in restrictive cell types. Mg(2+) is required as a cofactor. Phosphorylated on both serine and threonine residues. Phosphorylation on Ser-120 and Ser-123 inhibits viral replication, while phosphorylation on Thr-124 enhances replication by activating the DNA-binding domain. Phosphorylation on Thr-701 is required for binding to host FBW7gamma isoform. Dephosphorylated preferentially by PP2A on Ser-120, Ser-123, Ser-677 and perhaps Ser-679. Small t antigen inhibits the dephosphorylation by the AC form of PP2A. Post-translationally, O-Glycosylated near the C-terminal region. In terms of processing, acetylated by CBP in a TP53-dependent manner.

The protein localises to the host nucleus. The enzyme catalyses Couples ATP hydrolysis with the unwinding of duplex DNA by translocating in the 3'-5' direction.. The catalysed reaction is ATP + H2O = ADP + phosphate + H(+). With respect to regulation, DNA helicase activity is inhibited by ATP-gamma-S. Functionally, isoform large T antigen is a key early protein essential for both driving viral replication and inducing cellular transformation. Plays a role in viral genome replication by driving entry of quiescent cells into the cell cycle and by autoregulating the synthesis of viral early mRNA. Displays highly oncogenic activities by corrupting the host cellular checkpoint mechanisms that guard cell division and the transcription, replication, and repair of DNA. Participates in the modulation of cellular gene expression preceeding viral DNA replication. This step involves binding to host key cell cycle regulators retinoblastoma protein RB1/pRb and TP53. Induces the disassembly of host E2F1 transcription factors from RB1, thus promoting transcriptional activation of E2F1-regulated S-phase genes. Inhibits host TP53 binding to DNA, abrogating the ability of TP53 to stimulate gene expression. Plays the role of a TFIID-associated factor (TAF) in transcription initiation for all three RNA polymerases, by stabilizing the TBP-TFIIA complex on promoters. Initiates viral DNA replication and unwinding via interactions with the viral origin of replication. Binds two adjacent sites in the SV40 origin. The replication fork movement is facilitated by Large T antigen helicase activity. Has processive 3'-5' DNA helicase activity which requires a short 3' single-stranded region and ATP; other (d)NTPs can partially replace ATP. Activates the transcription of viral late mRNA, through host TBP and TFIIA stabilization. Interferes with histone deacetylation mediated by HDAC1, leading to activation of transcription. May inactivate the growth-suppressing properties of the E3 ubiquitin ligase CUL7. Isoform 17kT antigen targets host RBL2 for degradation and promotes cell proliferation. Transactivates host cyclin A promoter through its J domain. Its function is as follows. Unwinds G4 DNA (planar arrays of 4 guanine bases stabilized by hydrogen bonds, parallel and antiparallel arrays were tested); unwinding occurs in the 3'-5' direction, requires a 3' single-stranded end and hydrolyzable ATP. In Macaca (macaques), this protein is Large T antigen.